Here is a 71-residue protein sequence, read N- to C-terminus: DNA gyrase inhibitor YacG (71 aa).

Positions 8, 11, 27, and 31 each coordinate Zn(2+). The interval 48 to 71 is disordered; that stretch reads VVEDDDLPPDAPGGESGGASGRLN. Over residues 61–71 the composition is skewed to gly residues; the sequence is GESGGASGRLN.

This sequence belongs to the DNA gyrase inhibitor YacG family. In terms of assembly, interacts with GyrB. It depends on Zn(2+) as a cofactor.

Functionally, inhibits all the catalytic activities of DNA gyrase by preventing its interaction with DNA. Acts by binding directly to the C-terminal domain of GyrB, which probably disrupts DNA binding by the gyrase. The sequence is that of DNA gyrase inhibitor YacG from Ralstonia nicotianae (strain ATCC BAA-1114 / GMI1000) (Ralstonia solanacearum).